The sequence spans 190 residues: Surfactant protein C (190 aa).

Positions 1 to 24 are excised as a propeptide; that stretch reads MDVGSKEVLMESPPDYTAVPGGRL. Residues cysteine 28 and cysteine 29 are each lipidated (S-palmitoyl cysteine). Residues 59 to 190 constitute a propeptide that is removed on maturation; the sequence is HMSQKHTEMV…LCGEVPLYYT (132 aa). The BRICHOS domain occupies 94–190; the sequence is FSIGSTGTVV…LCGEVPLYYT (97 aa). A disulfide bridge connects residues cysteine 121 and cysteine 182.

It localises to the secreted. It is found in the extracellular space. The protein resides in the surface film. Its function is as follows. Pulmonary surfactant associated proteins promote alveolar stability by lowering the surface tension at the air-liquid interface in the peripheral air spaces. The polypeptide is Surfactant protein C (SFTPC) (Bos taurus (Bovine)).